The following is a 148-amino-acid chain: UPF0178 protein BH16190 (148 aa).

The protein belongs to the UPF0178 family.

This is UPF0178 protein BH16190 from Bartonella henselae (strain ATCC 49882 / DSM 28221 / CCUG 30454 / Houston 1) (Rochalimaea henselae).